Reading from the N-terminus, the 609-residue chain is UvrABC system protein C (609 aa).

In terms of domain architecture, GIY-YIG spans 15 to 92 (TGSGVYQMQD…IKQFRPRYNV (78 aa)). In terms of domain architecture, UVR spans 202–237 (DQVIIKLTERMEVASENLVFEEAAHYRDQIRQLRRL).

Belongs to the UvrC family. Interacts with UvrB in an incision complex.

Its subcellular location is the cytoplasm. The UvrABC repair system catalyzes the recognition and processing of DNA lesions. UvrC both incises the 5' and 3' sides of the lesion. The N-terminal half is responsible for the 3' incision and the C-terminal half is responsible for the 5' incision. The sequence is that of UvrABC system protein C from Coxiella burnetii (strain CbuG_Q212) (Coxiella burnetii (strain Q212)).